The following is a 268-amino-acid chain: Probable ribosomal RNA small subunit methyltransferase A (268 aa).

His23, Leu25, Gly50, Glu71, Asp95, and Asn110 together coordinate S-adenosyl-L-methionine.

This sequence belongs to the class I-like SAM-binding methyltransferase superfamily. rRNA adenine N(6)-methyltransferase family. RsmA subfamily.

Its subcellular location is the cytoplasm. Functionally, specifically dimethylates two adjacent adenosines in the loop of a conserved hairpin near the 3'-end of 16S rRNA in the 30S particle. May play a critical role in biogenesis of 30S subunits. This chain is Probable ribosomal RNA small subunit methyltransferase A, found in Pyrococcus horikoshii (strain ATCC 700860 / DSM 12428 / JCM 9974 / NBRC 100139 / OT-3).